Consider the following 732-residue polypeptide: MSKQTFSTTFAGKPLVVEVGQVAKQANGATVVRYGESTVLTAAVMSKKMATGDFFPLQVNYEEKMYAAGKFPGGFMKREGRPSTDATLTARLIDRPIRPMFAEGFRNEIQVINTVLSYDENASAPMAAMFGSSLALSISDIPFNGPIAGVQVGYIDGEFIINPDKAQMEASLLELTVAGSKEAINMVESGAKELSEDIMLEALLKGHQAIQELIAFQEEIVAAVGKEKAEVELLQVDADLQAEIVAKYNADLQKAVQVEEKKAREAATEAVKETVKAEYEAKFAEDENLATIMRDVAEILEQMEHAEVRRLITEDKVRPDGRKVDEIRPLDAQIDFLPKVHGSGLFTRGQTQALSVLTLAPMGDTQIIDGLDDEYKKRFLHHYNFPQYSVGETGRYGAAGRREIGHGALGERALEQVLPSLEEFPYAIRLVAEVLESNGSSSQASICAGTLALMAGGVPIKAPVAGIAMGLISDGTNYTVLTDIQGLEDHFGDMDFKVAGTRDGITALQMDIKIEGITPQILEEALAQAKKARFEILDLIETTIPAPRPELAPTAPKIDTIQIDVDKIKIVIGKGGETIDKIIAETGVKIDIDEEGLVQIFSSDQAAIDRTKEIITSLVREAKVGEVYHAKVVRIEKFGAFVNLFDKTDALVHISEIAWTRTANVSDVLEVGEEVDVKVIKVDDKGRVDASMKALIPRPPKPEKKEEKASEAKEASNDQASKSQSETASEEK.

Residues Asp-489 and Asp-495 each coordinate Mg(2+). One can recognise a KH domain in the interval Pro-556–Ile-615. The region spanning Gly-625–Lys-693 is the S1 motif domain. The disordered stretch occupies residues Ser-691–Lys-732. The segment covering Pro-700–Ser-716 has biased composition (basic and acidic residues). The segment covering Asn-717 to Lys-732 has biased composition (polar residues).

This sequence belongs to the polyribonucleotide nucleotidyltransferase family. The cofactor is Mg(2+).

It localises to the cytoplasm. It catalyses the reaction RNA(n+1) + phosphate = RNA(n) + a ribonucleoside 5'-diphosphate. Functionally, involved in mRNA degradation. Catalyzes the phosphorolysis of single-stranded polyribonucleotides processively in the 3'- to 5'-direction. The chain is Polyribonucleotide nucleotidyltransferase from Streptococcus uberis (strain ATCC BAA-854 / 0140J).